Here is a 442-residue protein sequence, read N- to C-terminus: MSKTYHFIGIKGSGMSALALMLHQMGHMVQGSDVEKYYFTQRGLEQAGITILPFSEDNITPDMELIVGNAFRENNKEVAYALRHQIPFKRYHDFLGDFMKSFISFAVAGAHGKTSTTGLLSHVLKNITDTSYLIGDGTGRGSANAQYFVFESDEYERHFMPYHPEYSIITNIDFDHPDYFTGIADVRNAFNDYAKQVKKALFVYGEDDELKKIEAPAPIYYYGFEEGNDFIAYDITRTTNGSDFKVKHQGEVIGQFHVPAYGKHNILNATAVIANLFVAGIDMALVADHLKTFSGVKRRFTEKIVNDTIIIDDFAHHPTEIVATIDAARQKYPSKEIVAIFQPHTFTRTIALLEDFACALNEADSVYLAQIYGSAREVDKGEVKVEDLAAKIIKPSQVVTVENVSPLLDHDNAVYVFMGAGDIQLYEHSFEELLANLTKNNQ.

Residue 109–115 coordinates ATP; sequence GAHGKTS.

It belongs to the MurCDEF family.

It localises to the cytoplasm. The catalysed reaction is UDP-N-acetyl-alpha-D-muramate + L-alanine + ATP = UDP-N-acetyl-alpha-D-muramoyl-L-alanine + ADP + phosphate + H(+). It participates in cell wall biogenesis; peptidoglycan biosynthesis. Cell wall formation. The sequence is that of UDP-N-acetylmuramate--L-alanine ligase from Streptococcus pyogenes serotype M18 (strain MGAS8232).